The chain runs to 133 residues: Large-conductance mechanosensitive channel (133 aa).

Transmembrane regions (helical) follow at residues 19–39 (IDLAVGVVIGGAFGKIVTSLV) and 79–99 (IQSVVDFIIISFSIFLFVKLI).

The protein belongs to the MscL family. In terms of assembly, homopentamer.

It localises to the cell membrane. Channel that opens in response to stretch forces in the membrane lipid bilayer. May participate in the regulation of osmotic pressure changes within the cell. In Clostridium tetani (strain Massachusetts / E88), this protein is Large-conductance mechanosensitive channel.